An 802-amino-acid chain; its full sequence is Leucine--tRNA ligase (802 aa).

A 'HIGH' region motif is present at residues 40–51; it reads PYPSGAGLHVGH. The 'KMSKS' region signature appears at 576–580; the sequence is KMSKS. Lys-579 contacts ATP.

The protein belongs to the class-I aminoacyl-tRNA synthetase family.

The protein resides in the cytoplasm. It catalyses the reaction tRNA(Leu) + L-leucine + ATP = L-leucyl-tRNA(Leu) + AMP + diphosphate. In Bacillus thuringiensis subsp. konkukian (strain 97-27), this protein is Leucine--tRNA ligase.